A 234-amino-acid polypeptide reads, in one-letter code: 7-cyano-7-deazaguanine synthase (234 aa).

13–23 (LSGGQDSTTCL) is an ATP binding site. Cys193, Cys201, Cys204, and Cys207 together coordinate Zn(2+).

It belongs to the QueC family. Requires Zn(2+) as cofactor.

The catalysed reaction is 7-carboxy-7-deazaguanine + NH4(+) + ATP = 7-cyano-7-deazaguanine + ADP + phosphate + H2O + H(+). The protein operates within purine metabolism; 7-cyano-7-deazaguanine biosynthesis. Its function is as follows. Catalyzes the ATP-dependent conversion of 7-carboxy-7-deazaguanine (CDG) to 7-cyano-7-deazaguanine (preQ(0)). This is 7-cyano-7-deazaguanine synthase from Chromobacterium violaceum (strain ATCC 12472 / DSM 30191 / JCM 1249 / CCUG 213 / NBRC 12614 / NCIMB 9131 / NCTC 9757 / MK).